The chain runs to 201 residues: LexA repressor (201 aa).

The H-T-H motif DNA-binding region spans 28–48; the sequence is RAEIANQLGFRSANAAEEHLK. Active-site for autocatalytic cleavage activity residues include S118 and K155.

It belongs to the peptidase S24 family. Homodimer.

The enzyme catalyses Hydrolysis of Ala-|-Gly bond in repressor LexA.. In terms of biological role, represses a number of genes involved in the response to DNA damage (SOS response), including recA and lexA. In the presence of single-stranded DNA, RecA interacts with LexA causing an autocatalytic cleavage which disrupts the DNA-binding part of LexA, leading to derepression of the SOS regulon and eventually DNA repair. The polypeptide is LexA repressor (Saccharophagus degradans (strain 2-40 / ATCC 43961 / DSM 17024)).